We begin with the raw amino-acid sequence, 126 residues long: Holo-[acyl-carrier-protein] synthase (126 aa).

The Mg(2+) site is built by D9 and E58.

Belongs to the P-Pant transferase superfamily. AcpS family. It depends on Mg(2+) as a cofactor.

The protein localises to the cytoplasm. The catalysed reaction is apo-[ACP] + CoA = holo-[ACP] + adenosine 3',5'-bisphosphate + H(+). Its function is as follows. Transfers the 4'-phosphopantetheine moiety from coenzyme A to a Ser of acyl-carrier-protein. The protein is Holo-[acyl-carrier-protein] synthase of Vibrio vulnificus (strain YJ016).